The chain runs to 299 residues: Probable lipid kinase YegS-like (299 aa).

The DAGKc domain maps to 2–133 (SRSAGSFLIL…IDIAHVNDKT (132 aa)). ATP contacts are provided by residues Thr-40, 66-72 (GDGTINE), and Thr-95. Mg(2+) is bound by residues Leu-215, Asp-218, and Leu-220. Glu-271 (proton acceptor) is an active-site residue.

The protein belongs to the diacylglycerol/lipid kinase family. YegS lipid kinase subfamily. The cofactor is Mg(2+). Requires Ca(2+) as cofactor.

It localises to the cytoplasm. Functionally, probably phosphorylates lipids; the in vivo substrate is unknown. In Cronobacter sakazakii (strain ATCC BAA-894) (Enterobacter sakazakii), this protein is Probable lipid kinase YegS-like.